Here is a 34-residue protein sequence, read N- to C-terminus: U2-theraphotoxin-Bs1a (34 aa).

3 disulfide bridges follow: Cys-2-Cys-16, Cys-9-Cys-21, and Cys-15-Cys-28.

As to expression, expressed by the venom gland.

It localises to the secreted. The sequence is that of U2-theraphotoxin-Bs1a from Brachypelma smithi (Mexican red knee tarantula).